Reading from the N-terminus, the 179-residue chain is Large ribosomal subunit protein uL5 (179 aa).

This sequence belongs to the universal ribosomal protein uL5 family. In terms of assembly, part of the 50S ribosomal subunit; part of the 5S rRNA/L5/L18/L25 subcomplex. Contacts the 5S rRNA and the P site tRNA. Forms a bridge to the 30S subunit in the 70S ribosome.

In terms of biological role, this is one of the proteins that bind and probably mediate the attachment of the 5S RNA into the large ribosomal subunit, where it forms part of the central protuberance. In the 70S ribosome it contacts protein S13 of the 30S subunit (bridge B1b), connecting the 2 subunits; this bridge is implicated in subunit movement. Contacts the P site tRNA; the 5S rRNA and some of its associated proteins might help stabilize positioning of ribosome-bound tRNAs. This Synechococcus sp. (strain RCC307) protein is Large ribosomal subunit protein uL5.